The following is a 117-amino-acid chain: Large ribosomal subunit protein uL18 (117 aa).

This sequence belongs to the universal ribosomal protein uL18 family. Part of the 50S ribosomal subunit; part of the 5S rRNA/L5/L18/L25 subcomplex. Contacts the 5S and 23S rRNAs.

Functionally, this is one of the proteins that bind and probably mediate the attachment of the 5S RNA into the large ribosomal subunit, where it forms part of the central protuberance. This Vibrio proteolyticus (Aeromonas proteolytica) protein is Large ribosomal subunit protein uL18.